A 710-amino-acid chain; its full sequence is F-box/WD repeat-containing protein 7 (710 aa).

The segment at 1 to 158 (MNQELLSVGS…CSSVSDLPAH (158 aa)) is disordered. Serine 26 bears the Phosphoserine mark. Residues 46–55 (RHQEEEHTAR) show a composition bias toward basic and acidic residues. Over residues 69–84 (QNDTQQGQVEENNNRF) the composition is skewed to polar residues. The span at 87 to 132 (VDEDSSGNQEEQEEDEEHAGEQEEEEEEEEEEEEMDQESDDFDPSD) shows a compositional bias: acidic residues. Residues 133-142 (DSSREDEHTH) are compositionally biased toward basic and acidic residues. Polar residues predominate over residues 143 to 158 (NSNVTNCSSVSDLPAH). A Phosphothreonine modification is found at threonine 208. At serine 230 the chain carries Phosphoserine; by SGK1. Residues 281 to 327 (RDFISLLPKELALYVLSFLEPKDLLQAAQTCRYWRILAEDNLLWREK) enclose the F-box domain. WD repeat units lie at residues 381 to 421 (GHDD…RTLV), 423 to 459 (HTGGVWSSQMRDNIIISGSTDRTLKVWNAETGECIHT), 462 to 501 (GHTSTVRCMHLHEKRVVSGSRDATLRVWDIETGQCLHVLM), 503 to 539 (HVAAVRCVQYDGRRVVSGAYDFMVKVWDPETETCLHT), 542 to 581 (GHTNRVYSLQFDGIHVVSGSLDTSIRVWDVETGNCIHTLT), 583 to 621 (HQSLTSGMELKDNILVSGNADSTVKIWDIKTGQCLQTLQ), and 625 to 662 (KHQSAVTCLQFNKNFVITSSDDGTVKLWDLKTGEFIRN).

Homodimer; homodimerization plays a role in substrate binding and/or ubiquitination and degradation. Component of the SCF(FBXW7) complex consisting of CUL1, RBX1, SKP1 and FBXW7. Interacts (via F-box domain) with SKP1. Interacts (via F-box domain) with pseudophosphatase STYX; the interaction is direct and prevents FBXW7 interaction with SKP1. Interacts with cyclin-E (CCNE1 or CCNE2). Interacts with PSEN1. Forms a trimeric complex with NOTCH1 and SGK1. Interacts with NOTCH1 intracellular domain/NICD and NOTCH4 intracellular domain/NICD. Interacts with NOTCH2 intracellular domain (N2ICD). Interacts with MYC (when phosphorylated). Interacts with USP28, counteracting ubiquitination of MYC. Interacts (when phosphorylated at Thr-208) with PIN1, disrupting FBXW7 dimerization and promoting FBXW7 autoubiquitination and degradation. Interacts with UBE2QL1. Interacts with FAM83D; promotes FBXW7 degradation. Interacts with MYCN; FBXW7 competes with AURKA for binding to unphosphorylated MYCN but not for binding to phosphorylated MYCN. Interacts with JUN. Found in a complex with JUN and PRR7. Interacts with JUN and PRR7; the interaction inhibits ubiquitination-mediated JUN degradation, promoting its phosphorylation and transcriptional activity. Interacts with NFE2L1. Interacts with NR1D1. Interacts with RICTOR; mediates RICTOR ubiquitination and degradation. Interacts with USP38, counteracting ubiquitination of MYC. Phosphorylation at Thr-208 promotes interaction with PIN1, leading to disrupt FBXW7 dimerization and promoting FBXW7 autoubiquitination and degradation. Phosphorylated by ATM at Ser-26 in response to DNA damage, promoting recruitment to DNA damage sites and 'Lys-63'-linked ubiquitination of phosphorylated XRCC4. In terms of processing, ubiquitinated: autoubiquitinates following phosphorylation at Thr-208 and subsequent interaction with PIN1. Ubiquitination leads to its proteasomal degradation. In terms of tissue distribution, widely expressed with highest levels in brain, heart and testis.

It is found in the nucleus. The protein resides in the nucleoplasm. It localises to the chromosome. It functions in the pathway protein modification; protein ubiquitination. Its function is as follows. Substrate recognition component of a SCF (SKP1-CUL1-F-box protein) E3 ubiquitin-protein ligase complex which mediates the ubiquitination and subsequent proteasomal degradation of target proteins. Recognizes and binds phosphorylated sites/phosphodegrons within target proteins and thereafter brings them to the SCF complex for ubiquitination. Mediates ubiquitination and subsequent degradation of CCNE1 and MYC. Identified substrates include cyclin-E (CCNE1 or CCNE2), DISC1, JUN, MYC, NOTCH1 released notch intracellular domain (NICD), NOTCH2, MCL1, MLST8, RICTOR and probably PSEN1. Acts as a negative regulator of JNK signaling by binding to phosphorylated JUN and promoting its ubiquitination and subsequent degradation. SCF(FBXW7) complex mediates the ubiquitination and subsequent degradation of NFE2L1. Involved in bone homeostasis and negative regulation of osteoclast differentiation. Regulates the amplitude of the cyclic expression of hepatic core clock genes and genes involved in lipid and glucose metabolism via ubiquitination and proteasomal degradation of their transcriptional repressor NR1D1; CDK1-dependent phosphorylation of NR1D1 is necessary for SCF(FBXW7)-mediated ubiquitination. Also able to promote 'Lys-63'-linked ubiquitination in response to DNA damage. The SCF(FBXW7) complex facilitates double-strand break repair following phosphorylation by ATM: phosphorylation promotes localization to sites of double-strand breaks and 'Lys-63'-linked ubiquitination of phosphorylated XRCC4, enhancing DNA non-homologous end joining. The chain is F-box/WD repeat-containing protein 7 from Mus musculus (Mouse).